The sequence spans 865 residues: Alanine--tRNA ligase (865 aa).

Zn(2+) is bound by residues His-552, His-556, Cys-654, and His-658.

The protein belongs to the class-II aminoacyl-tRNA synthetase family. The cofactor is Zn(2+).

It localises to the cytoplasm. The enzyme catalyses tRNA(Ala) + L-alanine + ATP = L-alanyl-tRNA(Ala) + AMP + diphosphate. Catalyzes the attachment of alanine to tRNA(Ala) in a two-step reaction: alanine is first activated by ATP to form Ala-AMP and then transferred to the acceptor end of tRNA(Ala). Also edits incorrectly charged Ser-tRNA(Ala) and Gly-tRNA(Ala) via its editing domain. This chain is Alanine--tRNA ligase, found in Coxiella burnetii (strain Dugway 5J108-111).